A 105-amino-acid chain; its full sequence is Nucleoid-associated protein ABO_1774 (105 aa).

The segment at 85–105 (QQQDSMQNMAGGFPFPPGFKP) is disordered.

It belongs to the YbaB/EbfC family. As to quaternary structure, homodimer.

Its subcellular location is the cytoplasm. It is found in the nucleoid. Its function is as follows. Binds to DNA and alters its conformation. May be involved in regulation of gene expression, nucleoid organization and DNA protection. In Alcanivorax borkumensis (strain ATCC 700651 / DSM 11573 / NCIMB 13689 / SK2), this protein is Nucleoid-associated protein ABO_1774.